A 269-amino-acid chain; its full sequence is MPELPEVETSRRGIEPYLVGATILHAVVRNGRLRWPVSEEIYRLSDQPVLSVQRRAKYLLLELPEGWIIIHLGMSGSLRILPEELPPEKHDHVDLVMSNGKVLRYTDPRRFGAWLWTKELEGHNVLAHLGPEPLSDDFNGEYLHQKCAKKKTAIKPWLMDNKLVVGVGNIYASESLFAAGIHPDRLASSLSLAECELLARVIKAVLLRSIEQGGTTLKDFLQSDGKPGYFAQELQVYGRKGEPCRVCGTPIVATKHAQRATFYCRQCQK.

Residue proline 2 is the Schiff-base intermediate with DNA of the active site. Glutamate 3 (proton donor) is an active-site residue. The Proton donor; for beta-elimination activity role is filled by lysine 57. Residues histidine 90, arginine 109, and lysine 150 each contribute to the DNA site. The FPG-type zinc-finger motif lies at 235-269; the sequence is QVYGRKGEPCRVCGTPIVATKHAQRATFYCRQCQK. The active-site Proton donor; for delta-elimination activity is the arginine 259.

It belongs to the FPG family. In terms of assembly, monomer. Zn(2+) is required as a cofactor.

It carries out the reaction Hydrolysis of DNA containing ring-opened 7-methylguanine residues, releasing 2,6-diamino-4-hydroxy-5-(N-methyl)formamidopyrimidine.. The catalysed reaction is 2'-deoxyribonucleotide-(2'-deoxyribose 5'-phosphate)-2'-deoxyribonucleotide-DNA = a 3'-end 2'-deoxyribonucleotide-(2,3-dehydro-2,3-deoxyribose 5'-phosphate)-DNA + a 5'-end 5'-phospho-2'-deoxyribonucleoside-DNA + H(+). Its function is as follows. Involved in base excision repair of DNA damaged by oxidation or by mutagenic agents. Acts as a DNA glycosylase that recognizes and removes damaged bases. Has a preference for oxidized purines, such as 7,8-dihydro-8-oxoguanine (8-oxoG). Has AP (apurinic/apyrimidinic) lyase activity and introduces nicks in the DNA strand. Cleaves the DNA backbone by beta-delta elimination to generate a single-strand break at the site of the removed base with both 3'- and 5'-phosphates. The polypeptide is Formamidopyrimidine-DNA glycosylase (Escherichia coli O7:K1 (strain IAI39 / ExPEC)).